The following is a 210-amino-acid chain: Glutathione S-transferase P (210 aa).

Residues 2 to 81 (PPYTIVYFPV…HLGRSLGLYG (80 aa)) enclose the GST N-terminal domain. Position 4 is a phosphotyrosine; by EGFR (Tyr4). Residues Tyr8, Arg14, Trp39, Lys45, 52–53 (QL), and 65–66 (QS) each bind glutathione. A GST C-terminal domain is found at 83–204 (DQKEAALVDM…SSPDHVNRPI (122 aa)). N6-succinyllysine is present on residues Lys103 and Lys116. Residue Lys128 is modified to N6-acetyllysine.

The protein belongs to the GST superfamily. Pi family. As to quaternary structure, homodimer. Interacts with CDK5.

The protein resides in the cytoplasm. Its subcellular location is the mitochondrion. The protein localises to the nucleus. It carries out the reaction RX + glutathione = an S-substituted glutathione + a halide anion + H(+). The enzyme catalyses prostaglandin J2 + glutathione = prostaglandin J2-S-(R)-glutathione. The catalysed reaction is prostaglandin J2 + glutathione = prostaglandin J2-S-(S)-glutathione. It catalyses the reaction prostaglandin A2 + glutathione = prostaglandin A2-S-(S)-glutathione. It carries out the reaction 11(S)-hydroxy-14(S),15(S)-epoxy-(5Z,8Z,12E)-eicosatrienoate + glutathione = (11S,15S)-dihydroxy-14(R)-S-glutathionyl-(5Z,8Z,12E)-eicosatrienoate. Conjugation of reduced glutathione to a wide number of exogenous and endogenous hydrophobic electrophiles. Involved in the formation of glutathione conjugates of both prostaglandin A2 (PGA2) and prostaglandin J2 (PGJ2). Participates in the formation of novel hepoxilin regioisomers. Negatively regulates CDK5 activity via p25/p35 translocation to prevent neurodegeneration. The chain is Glutathione S-transferase P (GSTP1) from Mesocricetus auratus (Golden hamster).